The following is a 583-amino-acid chain: Putative ABC transporter ATP-binding protein exp8 (583 aa).

In terms of domain architecture, ABC transmembrane type-1 spans 25-308 (TFLALSFLLA…VTQNFSTLQT (284 aa)). The next 5 membrane-spanning stretches (helical) occupy residues 26–46 (FLAL…PLVA), 61–81 (AVTV…VQYV), 135–155 (MFSG…TTLY), 159–179 (VLDF…FLLV), and 259–279 (LGYA…GITV). The ABC transporter domain occupies 341 to 574 (IRFEHVCFSY…GGTYHKMYSL (234 aa)). 374–381 (GHTGSGKS) contacts ATP.

Belongs to the ABC transporter superfamily.

It localises to the cell membrane. This chain is Putative ABC transporter ATP-binding protein exp8 (exp8), found in Streptococcus pneumoniae serotype 4 (strain ATCC BAA-334 / TIGR4).